Here is a 332-residue protein sequence, read N- to C-terminus: tRNA dimethylallyltransferase (332 aa).

17 to 24 (GPTCSGKS) contributes to the ATP binding site. 19–24 (TCSGKS) contacts substrate. 2 interaction with substrate tRNA regions span residues 42–45 (DSMQ) and 166–170 (QRVAR).

This sequence belongs to the IPP transferase family. In terms of assembly, monomer. The cofactor is Mg(2+).

It catalyses the reaction adenosine(37) in tRNA + dimethylallyl diphosphate = N(6)-dimethylallyladenosine(37) in tRNA + diphosphate. Functionally, catalyzes the transfer of a dimethylallyl group onto the adenine at position 37 in tRNAs that read codons beginning with uridine, leading to the formation of N6-(dimethylallyl)adenosine (i(6)A). In Gluconacetobacter diazotrophicus (strain ATCC 49037 / DSM 5601 / CCUG 37298 / CIP 103539 / LMG 7603 / PAl5), this protein is tRNA dimethylallyltransferase.